We begin with the raw amino-acid sequence, 278 residues long: MGIRKYKPTTPGRRGSSVADFVEITRSTPEKSLVRPLHSKGGRNNAGRVTVRHQGGGHKRAYRVIDFRRHDKDGVPAKVAHIEYDPNRTARIALLHYADGEKRYIVAPRGLSQGDRVENGPTADIKPGNNLALRNIPVGTTIHAIELRPGGGAKFARSAGASVQLLAKEGTMAHLRMPSGEIRLVDARCRATIGEVGNAEQSNINWGKAGRMRWKGVRPTVRGVAMNPVDHPHGGGEGKTSGGRHPVSPWGQKEGRTRSPKKASNKYIVRRRKTNKKR.

Disordered stretches follow at residues 29 to 57 and 224 to 278; these read PEKS…QGGG and VAMN…NKKR. Residues 258-278 show a composition bias toward basic residues; the sequence is RSPKKASNKYIVRRRKTNKKR.

It belongs to the universal ribosomal protein uL2 family. Part of the 50S ribosomal subunit. Forms a bridge to the 30S subunit in the 70S ribosome.

Functionally, one of the primary rRNA binding proteins. Required for association of the 30S and 50S subunits to form the 70S ribosome, for tRNA binding and peptide bond formation. It has been suggested to have peptidyltransferase activity; this is somewhat controversial. Makes several contacts with the 16S rRNA in the 70S ribosome. The chain is Large ribosomal subunit protein uL2 from Streptomyces griseus subsp. griseus (strain JCM 4626 / CBS 651.72 / NBRC 13350 / KCC S-0626 / ISP 5235).